The chain runs to 632 residues: 2-hydroxyacyl-CoA lyase 2 (632 aa).

A helical membrane pass occupies residues 13–33; that stretch reads LFPSFLLLACGTLVAALLGAA. E98 contacts thiamine diphosphate. Residues 470 to 550 form a thiamine pyrophosphate binding region; that stretch reads DFVGTAAHLV…VMALVGNDAG (81 aa). Residues D521 and N547 each coordinate Mg(2+).

It belongs to the TPP enzyme family. The cofactor is Mg(2+). Requires thiamine diphosphate as cofactor. In terms of tissue distribution, expressed in all tissues tested, with highest expression in heart, pancreas and placenta.

It localises to the endoplasmic reticulum membrane. It catalyses the reaction 2-hydroxyoctadecanoyl-CoA = heptadecanal + formyl-CoA. It carries out the reaction (2R)-hydroxyhexadecanoyl-CoA = pentadecanal + formyl-CoA. Its function is as follows. Endoplasmic reticulum 2-OH acyl-CoA lyase involved in the cleavage (C1 removal) reaction in the fatty acid alpha-oxydation in a thiamine pyrophosphate (TPP)-dependent manner. Involved in the phytosphingosine degradation pathway. The chain is 2-hydroxyacyl-CoA lyase 2 from Homo sapiens (Human).